Reading from the N-terminus, the 37-residue chain is Photosystem I reaction center subunit VIII (37 aa).

Residues Ser9–Leu29 form a helical membrane-spanning segment.

Belongs to the PsaI family.

The protein localises to the plastid. Its subcellular location is the chloroplast thylakoid membrane. In terms of biological role, may help in the organization of the PsaL subunit. The chain is Photosystem I reaction center subunit VIII from Cucumis sativus (Cucumber).